Reading from the N-terminus, the 78-residue chain is Large ribosomal subunit protein bL28 (78 aa).

A disordered region spans residues 1–21; sequence MSRVCQVTGKRPMVGNNRSHA.

The protein belongs to the bacterial ribosomal protein bL28 family.

This chain is Large ribosomal subunit protein bL28, found in Shewanella halifaxensis (strain HAW-EB4).